Consider the following 507-residue polypeptide: MITLTPGRLTLPQLRRIARENVQIALDPASFAAIDRGAQAVADIAAKGEPAYGINTGFGRLASTHIPHDQLELLQKNLVLSHAVGVGEPMARPVVRLLMALKLSSLGRGHSGIRRVVMDALVALFNADVLPLIPVKGSVGASGDLAPLAHMSAVLLGIGDVFIRGERASAAEGLRVAGLAPLTLEAKEGLALLNGTQASTALALDNLFAIEDLYRTALVSGALSVDAAAGSVKPFDARIHELRGHRGQIDAAAAYRSLLDGSAINVSHRDCDKVQDPYSLRCQPQVMGACLDQIRHAAGVLLIEANAVSDNPLIFPDTGEVLSGGNFHAEPVAFAADNLAIAAAEIGALAERRIALLIDATLSGLPPFLVKDGGVNSGFMIAHVTAAALASENKTLAHPASVDSLPTSANQEDHVSMATFAARKLADIAENVANILAIELLAAAQGVDLRAPHATSPALQHAMKTIRADVAHYDLDHYFAPDIAVVARRVRERAFATLSPLSFESEQ.

The 5-imidazolinone (Ala-Gly) cross-link spans 141–143; it reads ASG. A 2,3-didehydroalanine (Ser) modification is found at Ser142.

Belongs to the PAL/histidase family. Contains an active site 4-methylidene-imidazol-5-one (MIO), which is formed autocatalytically by cyclization and dehydration of residues Ala-Ser-Gly.

It localises to the cytoplasm. The enzyme catalyses L-histidine = trans-urocanate + NH4(+). It participates in amino-acid degradation; L-histidine degradation into L-glutamate; N-formimidoyl-L-glutamate from L-histidine: step 1/3. The chain is Histidine ammonia-lyase from Burkholderia pseudomallei (strain 668).